The sequence spans 370 residues: MSHASPAAKPSNSKNPRVFFDVDIGGERVGRIVLELFADIVPKTAENFRALCTGEKGTGSTTGKPLHFKGCPFHRIIKKFMIQGGDFSNQNGTGGESIYGEKFEDENFHYKHDREGLLSMANAGPNTNGSQFFITTVPTPHLDGKHVVFGQVIKGLGVARTLENVEVNGEKPAKLCVIAECGELKEGDDWGIFPKDGSGDSHPDFPEDADIDLKDVDKILLISEDLKNIGNTFFKSQNWEMAIKKYAKVLRYVDSSKAVIEKADRSRLQPIALSCVLNIGACKLKMSNWQGAIDSCLEALEMDPSNTKALYRKAQGWQGLKEYDQALADLKKAQEIAPGDKAIQAELLKVKQMIKAQKDKEKAVYAKMFA.

The residue at position 5 (Ser-5) is a Phosphoserine. Positions 19 to 183 (FFDVDIGGER…KLCVIAECGE (165 aa)) constitute a PPIase cyclophilin-type domain. Lys-171 is modified (N6-acetyllysine). Residues 185-215 (KEGDDWGIFPKDGSGDSHPDFPEDADIDLKD) form a chaperone activity region. Residue Ser-198 is modified to Phosphoserine. The tract at residues 214–370 (KDVDKILLIS…EKAVYAKMFA (157 aa)) is interaction with HSP90AB1. TPR repeat units follow at residues 223-256 (SEDL…VDSS), 273-306 (LSCV…DPSN), and 307-340 (TKAL…APGD).

It belongs to the cyclophilin-type PPIase family. PPIase D subfamily. In terms of assembly, identified in ESR1 or NR3C1/GCR steroid receptor-chaperone complexes. Found in HSP90 chaperone complexes with kinase clients LCK or EIF2AK1. Two monomers associate with one HSP90 homodimer. Interacts with HSP90AA1. Interacts with HSP90AB1; PPID and FKBP4 compete for binding to HSP90AB1 and the interaction is mutually exclusive with the PPID:HSPA8 interaction. Interacts with HSPA8; PPID and STIP1 but not FKBP4 compete for binding to HSPA8 and the interaction is mutually exclusive with the PPID:HSP90AB1 interaction. Interacts with S100A1 and S100A2; the interactions dissociate the PPID:HSP90AA1 interaction. Interacts with S100A6. Interacts with MYB, ILF2, XRCC6, RACK1 and RPS3. Interacts with cytoplasmic dynein 1 intermediate chain (DYNC1I1 or DYNC1I2).

It localises to the cytoplasm. It is found in the nucleus. The protein localises to the nucleolus. Its subcellular location is the nucleoplasm. It catalyses the reaction [protein]-peptidylproline (omega=180) = [protein]-peptidylproline (omega=0). Its activity is regulated as follows. Less sensitive to inhibition by cyclosporin A than is CYP-18. Its function is as follows. PPIase that catalyzes the cis-trans isomerization of proline imidic peptide bonds in oligopeptides and may therefore assist protein folding. Proposed to act as a co-chaperone in HSP90 complexes such as in unligated steroid receptors heterocomplexes. Different co-chaperones seem to compete for association with HSP90 thus establishing distinct HSP90-co-chaperone-receptor complexes with the potential to exert tissue-specific receptor activity control. May have a preference for estrogen receptor complexes and is not found in glucocorticoid receptor complexes. May be involved in cytoplasmic dynein-dependent movement of the receptor from the cytoplasm to the nucleus. May regulate MYB by inhibiting its DNA-binding activity. Involved in regulation of AHR signaling by promoting the formation of the AHR:ARNT dimer; the function is independent of HSP90 but requires the chaperone activity region. Involved in regulation of UV radiation-induced apoptosis. This is Peptidyl-prolyl cis-trans isomerase D from Mus musculus (Mouse).